Consider the following 500-residue polypeptide: ATP synthase subunit alpha (500 aa).

169 to 176 (GDRQTGKT) provides a ligand contact to ATP.

The protein belongs to the ATPase alpha/beta chains family. As to quaternary structure, F-type ATPases have 2 components, CF(1) - the catalytic core - and CF(0) - the membrane proton channel. CF(1) has five subunits: alpha(3), beta(3), gamma(1), delta(1), epsilon(1). CF(0) has three main subunits: a(1), b(2) and c(9-12). The alpha and beta chains form an alternating ring which encloses part of the gamma chain. CF(1) is attached to CF(0) by a central stalk formed by the gamma and epsilon chains, while a peripheral stalk is formed by the delta and b chains.

It localises to the cell membrane. It carries out the reaction ATP + H2O + 4 H(+)(in) = ADP + phosphate + 5 H(+)(out). Produces ATP from ADP in the presence of a proton gradient across the membrane. The alpha chain is a regulatory subunit. In Clostridioides difficile (strain 630) (Peptoclostridium difficile), this protein is ATP synthase subunit alpha.